The chain runs to 95 residues: Parvalbumin beta 3 (95 aa).

Alanine 1 is subject to N-acetylalanine. EF-hand domains follow at residues 39–66 (FFAI…FSAG) and 77–95 (DVDG…LVKA). Residues aspartate 44, aspartate 46, serine 48, phenylalanine 50, glutamate 52, glutamate 55, aspartate 77, aspartate 79, aspartate 81, methionine 83, and glutamate 88 each coordinate Ca(2+).

It belongs to the parvalbumin family.

In terms of biological role, in muscle, parvalbumin is thought to be involved in relaxation after contraction. It binds two calcium ions. This is Parvalbumin beta 3 from Merluccius paradoxus (Deep-water Cape hake).